The following is a 63-amino-acid chain: Alpha-conotoxin-like PuSG1.1 (63 aa).

An N-terminal signal peptide occupies residues 1 to 21 (MRCLAFLVVTLLLFTATATTG). The propeptide occupies 22–43 (ASNGMNAAASGEAPDSISLAVR). 2 disulfide bridges follow: Cys-46/Cys-52 and Cys-47/Cys-60. The interval 48–50 (PDP) is lacks the Ser-Xaa-Pro motif that is crucial for potent interaction with nAChR.

It belongs to the conotoxin A superfamily. In terms of tissue distribution, expressed by the salivary gland.

The protein localises to the secreted. Functionally, alpha-conopeptides-like may act on postsynaptic membranes, they bind to the nicotinic acetylcholine receptors (nAChR) and thus inhibit them. Has possibly a distinct nAChR binding mode from other alpha-conotoxins, due to a different three residue motif (lacks the Ser-Xaa-Pro motif). The sequence is that of Alpha-conotoxin-like PuSG1.1 from Conus pulicarius (Flea-bitten cone).